A 346-amino-acid chain; its full sequence is Uroporphyrinogen decarboxylase (346 aa).

Substrate-binding positions include 26 to 30 (RQAGR), Asp-76, Tyr-153, Ser-208, and His-323.

Belongs to the uroporphyrinogen decarboxylase family. In terms of assembly, homodimer.

It is found in the cytoplasm. It carries out the reaction uroporphyrinogen III + 4 H(+) = coproporphyrinogen III + 4 CO2. It functions in the pathway porphyrin-containing compound metabolism; protoporphyrin-IX biosynthesis; coproporphyrinogen-III from 5-aminolevulinate: step 4/4. Its function is as follows. Catalyzes the decarboxylation of four acetate groups of uroporphyrinogen-III to yield coproporphyrinogen-III. The polypeptide is Uroporphyrinogen decarboxylase (Prochlorococcus marinus (strain MIT 9301)).